A 1092-amino-acid chain; its full sequence is Probable cellulose synthase A catalytic subunit 6 [UDP-forming] (1092 aa).

Residues 1–280 (MEASAGLVAG…SSSRINPYRM (280 aa)) lie on the Cytoplasmic side of the membrane. Residues C42, C45, C61, C64, C69, C72, C84, and C87 each coordinate Zn(2+). Residues 42-88 (CQICGDDVGEGPDGEPFVACNECAFPVCRNCYDYERREGSQACPQCK) form an RING-type; degenerate zinc finger. The disordered stretch occupies residues 100–123 (VAGDEEEDGVDDLEGEFGLDGRED). Positions 103-116 (DEEEDGVDDLEGEF) are enriched in acidic residues. A helical transmembrane segment spans residues 281 to 301 (IIIIRLVVLGFFFHYRVMHPV). Residues 302–303 (ND) are Extracellular-facing. A helical membrane pass occupies residues 304-324 (AFALWLISVICEIWFAMSWIL). Over 325–868 (DQFPKWLPIE…FLERFSYINS (544 aa)) the chain is Cytoplasmic. S363, K369, E370, and D399 together coordinate UDP-alpha-D-glucose. D399 is an active-site residue. Residues 453–480 (VRERRAMKRDYEEFKVRINALVAKAQKV) adopt a coiled-coil conformation. Position 540 (K540) interacts with UDP-alpha-D-glucose. Mn(2+) is bound by residues K541 and D565. The active site involves D792. Residues 869-889 (IVYPWTSIPLLAYCTLPAICL) form a helical membrane-spanning segment. Topologically, residues 890-901 (LTGKFITPELTN) are extracellular. Residues 902-922 (VASLWFMSLFICIFVTGILEM) form a helical membrane-spanning segment. Over 923-937 (RWSGVAIDDWWRNEQ) the chain is Cytoplasmic. Residues 938–958 (FWVIGGVSSHLFAVFQGLLKV) form a helical membrane-spanning segment. The Extracellular segment spans residues 959–987 (LAGVDTSFTVTSKAGDDEEFSELYTFKWT). A helical membrane pass occupies residues 988-1008 (TLLIPPTTLLLLNFIGVVAGV). At 1009–1019 (SNAINNGYESW) the chain is on the cytoplasmic side. The chain crosses the membrane as a helical span at residues 1020 to 1040 (GPLFGKLFFAFWVIVHLYPFL). The Extracellular segment spans residues 1041 to 1049 (KGLVGRQNR). The chain crosses the membrane as a helical span at residues 1050-1070 (TPTIVIVWSILLASIFSLLWV). Residues 1071–1092 (RIDPFLAKNNGPLLEECGLDCN) lie on the Cytoplasmic side of the membrane.

It belongs to the glycosyltransferase 2 family. Plant cellulose synthase subfamily. Mn(2+) serves as cofactor. It depends on Zn(2+) as a cofactor.

Its subcellular location is the cell membrane. The catalysed reaction is [(1-&gt;4)-beta-D-glucosyl](n) + UDP-alpha-D-glucose = [(1-&gt;4)-beta-D-glucosyl](n+1) + UDP + H(+). The protein operates within glycan metabolism; plant cellulose biosynthesis. Its function is as follows. Probable catalytic subunit of cellulose synthase terminal complexes ('rosettes'), required for beta-1,4-glucan microfibril crystallization, a major mechanism of the cell wall formation. The sequence is that of Probable cellulose synthase A catalytic subunit 6 [UDP-forming] (CESA6) from Oryza sativa subsp. japonica (Rice).